Here is a 405-residue protein sequence, read N- to C-terminus: Cysteine desulfurase IscS (405 aa).

Pyridoxal 5'-phosphate contacts are provided by residues 75–76 (AT), asparagine 156, glutamine 184, and 204–206 (SAH). Lysine 207 carries the post-translational modification N6-(pyridoxal phosphate)lysine. Threonine 244 is a binding site for pyridoxal 5'-phosphate. Cysteine 329 functions as the Cysteine persulfide intermediate in the catalytic mechanism. Cysteine 329 contacts [2Fe-2S] cluster.

This sequence belongs to the class-V pyridoxal-phosphate-dependent aminotransferase family. NifS/IscS subfamily. As to quaternary structure, homodimer. Forms a heterotetramer with IscU, interacts with other sulfur acceptors. Requires pyridoxal 5'-phosphate as cofactor.

The protein resides in the cytoplasm. The enzyme catalyses (sulfur carrier)-H + L-cysteine = (sulfur carrier)-SH + L-alanine. Its pathway is cofactor biosynthesis; iron-sulfur cluster biosynthesis. In terms of biological role, master enzyme that delivers sulfur to a number of partners involved in Fe-S cluster assembly, tRNA modification or cofactor biosynthesis. Catalyzes the removal of elemental sulfur atoms from cysteine to produce alanine. Functions as a sulfur delivery protein for Fe-S cluster synthesis onto IscU, an Fe-S scaffold assembly protein, as well as other S acceptor proteins. The sequence is that of Cysteine desulfurase IscS from Acinetobacter baumannii (strain SDF).